The following is a 159-amino-acid chain: Phosphopantetheine adenylyltransferase (159 aa).

Position 9 (Ser9) interacts with substrate. ATP contacts are provided by residues 9 to 10 (SF) and His17. Positions 41, 73, and 87 each coordinate substrate. ATP contacts are provided by residues 88 to 90 (GLR), Glu98, and 123 to 129 (YSYLSSS).

This sequence belongs to the bacterial CoaD family. As to quaternary structure, homohexamer. Mg(2+) is required as a cofactor.

Its subcellular location is the cytoplasm. The enzyme catalyses (R)-4'-phosphopantetheine + ATP + H(+) = 3'-dephospho-CoA + diphosphate. It participates in cofactor biosynthesis; coenzyme A biosynthesis; CoA from (R)-pantothenate: step 4/5. Reversibly transfers an adenylyl group from ATP to 4'-phosphopantetheine, yielding dephospho-CoA (dPCoA) and pyrophosphate. This is Phosphopantetheine adenylyltransferase from Clostridium botulinum (strain Eklund 17B / Type B).